The chain runs to 241 residues: Interleukin-6 (241 aa).

An N-terminal signal peptide occupies residues 1–26; sequence MNSFTSALRPGPLGCSLALLLVVATA. Residues 32 to 51 are disordered; sequence PVREDSNTKASPDKTLTPPG. Intrachain disulfides connect Cys-72–Cys-78 and Cys-101–Cys-111. Residue Asn-108 is glycosylated (N-linked (GlcNAc...) asparagine).

The protein belongs to the IL-6 superfamily. Component of a hexamer of two molecules each of IL6, IL6R and IL6ST; first binds to IL6R to associate with the signaling subunit IL6ST. Interacts with IL6R (via the N-terminal ectodomain); this interaction may be affected by IL6R-binding with SORL1, hence decreasing IL6 cis signaling. Interacts with SORL1 (via the N-terminal ectodomain); this interaction leads to IL6 internalization and lysosomal degradation. May form a trimeric complex with the soluble SORL1 ectodomain and soluble IL6R receptor; this interaction might stabilize circulating IL6, hence promoting IL6 trans signaling.

The protein resides in the secreted. In terms of biological role, cytokine with a wide variety of biological functions in immunity, tissue regeneration, and metabolism. Binds to IL6R, then the complex associates to the signaling subunit IL6ST/gp130 to trigger the intracellular IL6-signaling pathway. The interaction with the membrane-bound IL6R and IL6ST stimulates 'classic signaling', whereas the binding of IL6 and soluble IL6R to IL6ST stimulates 'trans-signaling'. Alternatively, 'cluster signaling' occurs when membrane-bound IL6:IL6R complexes on transmitter cells activate IL6ST receptors on neighboring receiver cells. Functionally, IL6 is a potent inducer of the acute phase response. Rapid production of IL6 contributes to host defense during infection and tissue injury, but excessive IL6 synthesis is involved in disease pathology. In the innate immune response, is synthesized by myeloid cells, such as macrophages and dendritic cells, upon recognition of pathogens through toll-like receptors (TLRs) at the site of infection or tissue injury. In the adaptive immune response, is required for the differentiation of B cells into immunoglobulin-secreting cells. Plays a major role in the differentiation of CD4(+) T cell subsets. Essential factor for the development of T follicular helper (Tfh) cells that are required for the induction of germinal-center formation. Required to drive naive CD4(+) T cells to the Th17 lineage. Also required for proliferation of myeloma cells and the survival of plasmablast cells. Acts as an essential factor in bone homeostasis and on vessels directly or indirectly by induction of VEGF, resulting in increased angiogenesis activity and vascular permeability. Induces, through 'trans-signaling' and synergistically with IL1B and TNF, the production of VEGF. Involved in metabolic controls, is discharged into the bloodstream after muscle contraction increasing lipolysis and improving insulin resistance. 'Trans-signaling' in central nervous system also regulates energy and glucose homeostasis. Mediates, through GLP-1, crosstalk between insulin-sensitive tissues, intestinal L cells and pancreatic islets to adapt to changes in insulin demand. Also acts as a myokine. Plays a protective role during liver injury, being required for maintenance of tissue regeneration. Also has a pivotal role in iron metabolism by regulating HAMP/hepcidin expression upon inflammation or bacterial infection. Through activation of IL6ST-YAP-NOTCH pathway, induces inflammation-induced epithelial regeneration. This chain is Interleukin-6 (IL6), found in Oryctolagus cuniculus (Rabbit).